The chain runs to 169 residues: E1B protein, small T-antigen (169 aa).

Belongs to the adenoviridae E1B 19 kDa protein family.

In Canis lupus familiaris (Dog), this protein is E1B protein, small T-antigen.